The primary structure comprises 212 residues: Inner membrane-spanning protein YciB (212 aa).

The next 6 membrane-spanning stretches (helical) occupy residues 19-39 (FYGA…PVAL), 47-67 (AIYL…ALGL), 82-102 (AVIL…FILW), 105-122 (TLVN…PLFG), 147-167 (LAWV…AYTF), and 177-197 (LFGM…YLGL).

It belongs to the YciB family.

The protein localises to the cell inner membrane. Plays a role in cell envelope biogenesis, maintenance of cell envelope integrity and membrane homeostasis. The chain is Inner membrane-spanning protein YciB from Thioalkalivibrio sulfidiphilus (strain HL-EbGR7).